A 526-amino-acid chain; its full sequence is ATP synthase subunit alpha (526 aa).

178-185 is an ATP binding site; the sequence is GDRQTGKT.

This sequence belongs to the ATPase alpha/beta chains family. As to quaternary structure, F-type ATPases have 2 components, CF(1) - the catalytic core - and CF(0) - the membrane proton channel. CF(1) has five subunits: alpha(3), beta(3), gamma(1), delta(1), epsilon(1). CF(0) has four main subunits: a(1), b(1), b'(1) and c(9-12).

Its subcellular location is the cell membrane. It carries out the reaction ATP + H2O + 4 H(+)(in) = ADP + phosphate + 5 H(+)(out). Produces ATP from ADP in the presence of a proton gradient across the membrane. The alpha chain is a regulatory subunit. This is ATP synthase subunit alpha from Roseiflexus castenholzii (strain DSM 13941 / HLO8).